A 388-amino-acid polypeptide reads, in one-letter code: MNLHEYQAKQLFAEFGLPVPEGYACDTPQEAFEAAGRISTAKKVVKCQVHAGGRGKAGGVELHDTKEGVKEFAQKWLGKNLVTYQTDANGQPVTKILVEEASNIANELYLGAVVDRASRKIVFMASTEGGVEIEKVAEETPELIHKAAIDPLVGPQAYQGRELAFKLGLEGDQIKQFVKIFMGLGTMFSQYDLALLEINPLVITAEGNLLCLDGKINIDSNALYRQPKLREMHDPSQEDEREAHAAQWELNYVALDGNVGCMVNGAGLAMGTMDIVNLHGGKPANFLDVGGGATKERVAEAFKIILSDDNVKAVLVNIFGGIVRCDMIAEGIIGAVKEVGVSVPVVVRLEGTNADLGREVLANSDVDIIAAESLTDAAQKVVAAAEAK.

The region spanning 9–244 is the ATP-grasp domain; that stretch reads KQLFAEFGLP…PSQEDEREAH (236 aa). Residues lysine 46, 53–55, glutamate 99, serine 102, and glutamate 107 contribute to the ATP site; that span reads GRG. Mg(2+) is bound by residues asparagine 199 and aspartate 213. Substrate contacts are provided by residues asparagine 264 and 321-323; that span reads GIV.

This sequence belongs to the succinate/malate CoA ligase beta subunit family. In terms of assembly, heterotetramer of two alpha and two beta subunits. Mg(2+) is required as a cofactor.

It catalyses the reaction succinate + ATP + CoA = succinyl-CoA + ADP + phosphate. It carries out the reaction GTP + succinate + CoA = succinyl-CoA + GDP + phosphate. It participates in carbohydrate metabolism; tricarboxylic acid cycle; succinate from succinyl-CoA (ligase route): step 1/1. Succinyl-CoA synthetase functions in the citric acid cycle (TCA), coupling the hydrolysis of succinyl-CoA to the synthesis of either ATP or GTP and thus represents the only step of substrate-level phosphorylation in the TCA. The beta subunit provides nucleotide specificity of the enzyme and binds the substrate succinate, while the binding sites for coenzyme A and phosphate are found in the alpha subunit. The protein is Succinate--CoA ligase [ADP-forming] subunit beta of Vibrio parahaemolyticus serotype O3:K6 (strain RIMD 2210633).